Consider the following 1177-residue polypeptide: Topoisomerase 1-associated factor 1 (1177 aa).

Disordered regions lie at residues 575–597, 791–815, 874–1001, and 1021–1177; these read AKQA…EEDL, REAW…PVKS, LTEP…ADQE, and LLHG…SDSE. Residues 583 to 597 are compositionally biased toward acidic residues; the sequence is IEGDDEEQASEEEDL. Residues 791–803 are compositionally biased toward basic and acidic residues; it reads REAWESQEQHSEG. 2 stretches are compositionally biased toward acidic residues: residues 911–921 and 954–963; these read FGSDSEGDDNV and EEEEPDEEDL. Basic and acidic residues predominate over residues 981–991; the sequence is IKSDLYIHASD. A compositionally biased stretch (polar residues) spans 1086–1096; the sequence is SLGQGSPSLQG. 2 stretches are compositionally biased toward acidic residues: residues 1108-1118 and 1146-1155; these read EENELDFDDDL and TIDEDDDDEA.

It belongs to the timeless family. In terms of assembly, component of the fork protection complex (FPC) consisting of tof1 and csm3.

It localises to the nucleus. Functionally, forms a fork protection complex (FPC) with csm3 and which is required for chromosome segregation during meiosis and DNA damage repair. FPC coordinates leading and lagging strand synthesis and moves with the replication fork. FPC stabilizes replication forks in a configuration that is recognized by replication checkpoint sensors. The protein is Topoisomerase 1-associated factor 1 (tof1) of Neosartorya fischeri (strain ATCC 1020 / DSM 3700 / CBS 544.65 / FGSC A1164 / JCM 1740 / NRRL 181 / WB 181) (Aspergillus fischerianus).